Consider the following 415-residue polypeptide: Amylovoran biosynthesis protein AmsJ (415 aa).

Belongs to the polysaccharide pyruvyl transferase family.

It participates in glycan metabolism; exopolysaccharide biosynthesis. Involved in the biosynthesis of amylovoran which functions as a virulence factor. The protein is Amylovoran biosynthesis protein AmsJ (amsJ) of Erwinia amylovora (Fire blight bacteria).